The sequence spans 544 residues: MPNGSIRNCANAVADTVRQTFSRKTWEHKEQLQTITEQKKFFLRKVRWQIAILAHFGFAISFGIRSNFGVAKNRMVNNFTDAYGEVHEREFLWTGAEVGMMESSFFYGYAASQIPAGVLAAKFAPNKIFMLGILVASFMNILSAISFNFHPYTDIFVMVVQAVQGLALGVLYPAMHGVWKFWAPPLERSKLATTAFTGSSVGVMTGLPASAYLVSHFSWSTPFYVFGVVGIIWSLIWMYVSSHSPETHGYISDDEKKQVTEKIGDVAVKNMSLTTLPWRDMMTSSAVWAIIICTFCRSWGFFLLLGNQLTYMKDVLHIDIKNSGFISIFPQFGMCIVTLATGQLCDYLRSSGKMSTEAVRKSVNTFGFTVEAMMLGCLAFVRDPVIAVTCLVIACTGSGSVLSGFNVNHFDIAPRYAPILMGIANGLGAVAGVGGMVTNTVTYQNPDGWKWVFLLAMAIDIFGVIFFLIFAKGDVLPWAREPEKEETFNEFVRRMSIKVRSLSRKTRNREGDTSYEKMEEDSEMKPCSKKVEARAPAEKSESSS.

Residues 1–49 lie on the Cytoplasmic side of the membrane; it reads MPNGSIRNCANAVADTVRQTFSRKTWEHKEQLQTITEQKKFFLRKVRWQ. The chain crosses the membrane as a helical span at residues 50–70; that stretch reads IAILAHFGFAISFGIRSNFGV. Over 71–104 the chain is Extracellular; it reads AKNRMVNNFTDAYGEVHEREFLWTGAEVGMMESS. A glycan (N-linked (GlcNAc...) asparagine) is linked at asparagine 78. The chain crosses the membrane as a helical span at residues 105–125; sequence FFYGYAASQIPAGVLAAKFAP. Over 126 to 127 the chain is Cytoplasmic; sequence NK. A helical membrane pass occupies residues 128–148; sequence IFMLGILVASFMNILSAISFN. At 149–154 the chain is on the extracellular side; it reads FHPYTD. The helical transmembrane segment at 155 to 175 threads the bilayer; it reads IFVMVVQAVQGLALGVLYPAM. Residues 176–193 lie on the Cytoplasmic side of the membrane; that stretch reads HGVWKFWAPPLERSKLAT. A helical membrane pass occupies residues 194–214; it reads TAFTGSSVGVMTGLPASAYLV. The Extracellular portion of the chain corresponds to 215-219; the sequence is SHFSW. Residues 220 to 240 form a helical membrane-spanning segment; it reads STPFYVFGVVGIIWSLIWMYV. The Cytoplasmic portion of the chain corresponds to 241-285; sequence SSHSPETHGYISDDEKKQVTEKIGDVAVKNMSLTTLPWRDMMTSS. Residues 286–306 form a helical membrane-spanning segment; that stretch reads AVWAIIICTFCRSWGFFLLLG. Topologically, residues 307–323 are extracellular; it reads NQLTYMKDVLHIDIKNS. A helical transmembrane segment spans residues 324–344; it reads GFISIFPQFGMCIVTLATGQL. At 345–360 the chain is on the cytoplasmic side; that stretch reads CDYLRSSGKMSTEAVR. The helical transmembrane segment at 361–381 threads the bilayer; it reads KSVNTFGFTVEAMMLGCLAFV. The Extracellular segment spans residues 382–384; it reads RDP. Residues 385-405 form a helical membrane-spanning segment; sequence VIAVTCLVIACTGSGSVLSGF. Residues 406–416 lie on the Cytoplasmic side of the membrane; sequence NVNHFDIAPRY. The chain crosses the membrane as a helical span at residues 417–437; sequence APILMGIANGLGAVAGVGGMV. The Extracellular segment spans residues 438-450; the sequence is TNTVTYQNPDGWK. A helical transmembrane segment spans residues 451 to 471; it reads WVFLLAMAIDIFGVIFFLIFA. At 472–544 the chain is on the cytoplasmic side; it reads KGDVLPWARE…APAEKSESSS (73 aa). The disordered stretch occupies residues 501–544; the sequence is SLSRKTRNREGDTSYEKMEEDSEMKPCSKKVEARAPAEKSESSS. Over residues 508 to 544 the composition is skewed to basic and acidic residues; it reads NREGDTSYEKMEEDSEMKPCSKKVEARAPAEKSESSS.

It belongs to the major facilitator superfamily. Sodium/anion cotransporter family. VGLUT subfamily.

The protein localises to the membrane. In Caenorhabditis elegans, this protein is Potential vesicular glutamate transporter vglu-3 (vglu-3).